Consider the following 437-residue polypeptide: tRNA-2-methylthio-N(6)-dimethylallyladenosine synthase (437 aa).

The MTTase N-terminal domain occupies 1 to 115 (MKVYIETMGC…ISQVIHKEKA (115 aa)). [4Fe-4S] cluster-binding residues include Cys-10, Cys-46, Cys-78, Cys-148, Cys-152, and Cys-155. In terms of domain architecture, Radical SAM core spans 134-367 (KKAQIRSLLN…QNRHKEILEE (234 aa)). The TRAM domain maps to 370–436 (KLEVGKTHVV…KGRLMAATKG (67 aa)).

Belongs to the methylthiotransferase family. MiaB subfamily. In terms of assembly, monomer. The cofactor is [4Fe-4S] cluster.

It is found in the cytoplasm. It carries out the reaction N(6)-dimethylallyladenosine(37) in tRNA + (sulfur carrier)-SH + AH2 + 2 S-adenosyl-L-methionine = 2-methylsulfanyl-N(6)-dimethylallyladenosine(37) in tRNA + (sulfur carrier)-H + 5'-deoxyadenosine + L-methionine + A + S-adenosyl-L-homocysteine + 2 H(+). Its function is as follows. Catalyzes the methylthiolation of N6-(dimethylallyl)adenosine (i(6)A), leading to the formation of 2-methylthio-N6-(dimethylallyl)adenosine (ms(2)i(6)A) at position 37 in tRNAs that read codons beginning with uridine. The polypeptide is tRNA-2-methylthio-N(6)-dimethylallyladenosine synthase (Helicobacter pylori (strain ATCC 700392 / 26695) (Campylobacter pylori)).